The primary structure comprises 229 residues: ATP-dependent Clp protease proteolytic subunit (229 aa).

Serine 101 (nucleophile) is an active-site residue. Histidine 126 is a catalytic residue.

It belongs to the peptidase S14 family. As to quaternary structure, component of the chloroplastic Clp protease core complex.

Its subcellular location is the plastid. It is found in the chloroplast stroma. The enzyme catalyses Hydrolysis of proteins to small peptides in the presence of ATP and magnesium. alpha-casein is the usual test substrate. In the absence of ATP, only oligopeptides shorter than five residues are hydrolyzed (such as succinyl-Leu-Tyr-|-NHMec, and Leu-Tyr-Leu-|-Tyr-Trp, in which cleavage of the -Tyr-|-Leu- and -Tyr-|-Trp bonds also occurs).. In terms of biological role, cleaves peptides in various proteins in a process that requires ATP hydrolysis. Has a chymotrypsin-like activity. Plays a major role in the degradation of misfolded proteins. The chain is ATP-dependent Clp protease proteolytic subunit from Mesostigma viride (Green alga).